Consider the following 120-residue polypeptide: NAD(P)H-quinone oxidoreductase subunit 3, chloroplastic (120 aa).

Transmembrane regions (helical) follow at residues 9 to 29 (IFWA…LISG), 64 to 84 (MFAL…PWAM), and 88 to 108 (VLGV…IVGS).

It belongs to the complex I subunit 3 family. In terms of assembly, NDH is composed of at least 16 different subunits, 5 of which are encoded in the nucleus.

It is found in the plastid. The protein localises to the chloroplast thylakoid membrane. It catalyses the reaction a plastoquinone + NADH + (n+1) H(+)(in) = a plastoquinol + NAD(+) + n H(+)(out). The catalysed reaction is a plastoquinone + NADPH + (n+1) H(+)(in) = a plastoquinol + NADP(+) + n H(+)(out). Its function is as follows. NDH shuttles electrons from NAD(P)H:plastoquinone, via FMN and iron-sulfur (Fe-S) centers, to quinones in the photosynthetic chain and possibly in a chloroplast respiratory chain. The immediate electron acceptor for the enzyme in this species is believed to be plastoquinone. Couples the redox reaction to proton translocation, and thus conserves the redox energy in a proton gradient. In Phaseolus vulgaris (Kidney bean), this protein is NAD(P)H-quinone oxidoreductase subunit 3, chloroplastic.